A 475-amino-acid chain; its full sequence is Ribulose bisphosphate carboxylase large chain (475 aa).

Positions 1–2 (MS) are excised as a propeptide. The residue at position 3 (Pro-3) is an N-acetylproline. Lys-14 bears the N6,N6,N6-trimethyllysine mark. The substrate site is built by Asn-123 and Thr-173. Residue Lys-175 is the Proton acceptor of the active site. A substrate-binding site is contributed by Lys-177. Mg(2+)-binding residues include Lys-201, Asp-203, and Glu-204. Lys-201 bears the N6-carboxylysine mark. His-294 acts as the Proton acceptor in catalysis. The substrate site is built by Arg-295, His-327, and Ser-379.

It belongs to the RuBisCO large chain family. Type I subfamily. As to quaternary structure, heterohexadecamer of 8 large chains and 8 small chains; disulfide-linked. The disulfide link is formed within the large subunit homodimers. It depends on Mg(2+) as a cofactor. Post-translationally, the disulfide bond which can form in the large chain dimeric partners within the hexadecamer appears to be associated with oxidative stress and protein turnover.

The protein resides in the plastid. Its subcellular location is the chloroplast. The enzyme catalyses 2 (2R)-3-phosphoglycerate + 2 H(+) = D-ribulose 1,5-bisphosphate + CO2 + H2O. It catalyses the reaction D-ribulose 1,5-bisphosphate + O2 = 2-phosphoglycolate + (2R)-3-phosphoglycerate + 2 H(+). Functionally, ruBisCO catalyzes two reactions: the carboxylation of D-ribulose 1,5-bisphosphate, the primary event in carbon dioxide fixation, as well as the oxidative fragmentation of the pentose substrate in the photorespiration process. Both reactions occur simultaneously and in competition at the same active site. The polypeptide is Ribulose bisphosphate carboxylase large chain (Castanea sativa (Sweet chestnut)).